A 532-amino-acid chain; its full sequence is P granule abnormality protein 2 (532 aa).

As to quaternary structure, interacts with pgl-1 and pgl-3; association with either pgl-1 or pgl-3 is not required for P-granule localization. Highly expressed in the germline.

The protein resides in the cytoplasmic granule. Its function is as follows. Transient component of P-granule which is involved in germline development. The polypeptide is P granule abnormality protein 2 (Caenorhabditis elegans).